The following is a 71-amino-acid chain: Translational regulator CsrA (71 aa).

Belongs to the CsrA/RsmA family. As to quaternary structure, homodimer; the beta-strands of each monomer intercalate to form a hydrophobic core, while the alpha-helices form wings that extend away from the core.

Its subcellular location is the cytoplasm. In terms of biological role, a key translational regulator that binds mRNA to regulate translation initiation and/or mRNA stability. Mediates global changes in gene expression, shifting from rapid growth to stress survival by linking envelope stress, the stringent response and the catabolite repression systems. Usually binds in the 5'-UTR; binding at or near the Shine-Dalgarno sequence prevents ribosome-binding, repressing translation, binding elsewhere in the 5'-UTR can activate translation and/or stabilize the mRNA. Its function is antagonized by small RNA(s). This Pseudoalteromonas atlantica (strain T6c / ATCC BAA-1087) protein is Translational regulator CsrA.